Reading from the N-terminus, the 418-residue chain is Hydroxysteroid dehydrogenase-like protein 2 (418 aa).

NADP(+) contacts are provided by residues 17–23 (GASRGIG), Lys42, and Asp74. Lys42 is modified (N6-(2-hydroxyisobutyryl)lysine). Lys116 is modified (N6-acetyllysine). Tyr168 serves as the catalytic Proton acceptor. Lys172 is a binding site for NADP(+). Residues 287–310 (STGAVPEFKEEKPQPQPKPRSGAV) are disordered. Residues 306-415 (RSGAVEETFR…KLEKLMNQMN (110 aa)) form the SCP2 domain. Lys318 bears the N6-succinyllysine mark.

Belongs to the short-chain dehydrogenases/reductases (SDR) family.

Its subcellular location is the peroxisome. It localises to the mitochondrion. In terms of biological role, has apparently no steroid dehydrogenase activity. Controls bile acid (BA) and lipid metabolism in response to nutritional cues. This Pongo abelii (Sumatran orangutan) protein is Hydroxysteroid dehydrogenase-like protein 2 (HSDL2).